Consider the following 1427-residue polypeptide: Coiled-coil domain-containing protein 144A (1427 aa).

The span at 1-11 (MASWGGEKRGG) shows a compositional bias: basic and acidic residues. 5 disordered regions span residues 1 to 32 (MASW…VGSQ), 87 to 189 (AARS…LTER), 213 to 261 (LPEN…CDRE), 453 to 485 (NMNQ…DSDR), and 528 to 586 (EEEM…EVKN). Polar residues-rich tracts occupy residues 129–150 (PESL…LSDE) and 167–178 (VSPSMPENQSAT). The span at 224 to 234 (QDSELTSEEEQ) shows a compositional bias: acidic residues. Over residues 453-467 (NMNQNSDSGSTNNYK) the composition is skewed to polar residues. Residues 490 to 545 (YLHEELQQDMQKFKNEVNTLEEEFLALKKEDVQLHKDVEEEMEKHRSNSTELSGTL) adopt a coiled-coil conformation. Basic and acidic residues predominate over residues 528-537 (EEEMEKHRSN). Residues 543–552 (GTLTDGTTVG) are compositionally biased toward low complexity. The span at 563-584 (PRKENGEHDRPADKTSNEKNEV) shows a compositional bias: basic and acidic residues. Coiled-coil stretches lie at residues 648-1129 (LLKL…DLTE) and 1155-1309 (FSMK…TQLT).

Belongs to the CCDC144 family.

May play a role in preventing the formation of kidney stones through inhibition of calcium oxalate monohydrate (COM) crystallization, attenuating COM-induced apoptotic injury to renal epithelial cells. May exhibit antilithiatic (preventing the formation of kidney stones) activity through crystal binding, hindering the crystal attachment to renal epithelial cells, a pre-requisite to initiate inflammatory response. This Homo sapiens (Human) protein is Coiled-coil domain-containing protein 144A (CCDC144A).